We begin with the raw amino-acid sequence, 387 residues long: Homoserine O-succinyltransferase (387 aa).

In terms of domain architecture, AB hydrolase-1 spans 49–358 (NAILICHALS…DAEQGHDSFL (310 aa)). S156 serves as the catalytic Nucleophile. Substrate is bound at residue R226. Active-site residues include D321 and H354. D355 is a binding site for substrate.

Belongs to the AB hydrolase superfamily. MetX family. Homodimer.

It is found in the cytoplasm. It catalyses the reaction L-homoserine + succinyl-CoA = O-succinyl-L-homoserine + CoA. It participates in amino-acid biosynthesis; L-methionine biosynthesis via de novo pathway; O-succinyl-L-homoserine from L-homoserine: step 1/1. Its activity is regulated as follows. Requires MetW for activity. In terms of biological role, transfers a succinyl group from succinyl-CoA to L-homoserine, forming succinyl-L-homoserine. The polypeptide is Homoserine O-succinyltransferase (Acinetobacter baylyi (strain ATCC 33305 / BD413 / ADP1)).